The following is a 323-amino-acid chain: tRNA U34 carboxymethyltransferase (323 aa).

Carboxy-S-adenosyl-L-methionine-binding positions include Lys91, Trp105, Lys110, Gly130, 152 to 154 (DPT), 181 to 182 (IE), Met196, Tyr200, and Arg315.

It belongs to the class I-like SAM-binding methyltransferase superfamily. CmoB family. In terms of assembly, homotetramer.

The enzyme catalyses carboxy-S-adenosyl-L-methionine + 5-hydroxyuridine(34) in tRNA = 5-carboxymethoxyuridine(34) in tRNA + S-adenosyl-L-homocysteine + H(+). Functionally, catalyzes carboxymethyl transfer from carboxy-S-adenosyl-L-methionine (Cx-SAM) to 5-hydroxyuridine (ho5U) to form 5-carboxymethoxyuridine (cmo5U) at position 34 in tRNAs. The polypeptide is tRNA U34 carboxymethyltransferase (Cronobacter sakazakii (strain ATCC BAA-894) (Enterobacter sakazakii)).